The following is a 596-amino-acid chain: Elongation factor 4 (596 aa).

A tr-type G domain is found at 2–184 (KHIRNFSIIA…VIVEQIPPPE (183 aa)). GTP-binding positions include 14 to 19 (DHGKST) and 131 to 134 (NKID).

The protein belongs to the TRAFAC class translation factor GTPase superfamily. Classic translation factor GTPase family. LepA subfamily.

The protein resides in the cell inner membrane. It catalyses the reaction GTP + H2O = GDP + phosphate + H(+). Required for accurate and efficient protein synthesis under certain stress conditions. May act as a fidelity factor of the translation reaction, by catalyzing a one-codon backward translocation of tRNAs on improperly translocated ribosomes. Back-translocation proceeds from a post-translocation (POST) complex to a pre-translocation (PRE) complex, thus giving elongation factor G a second chance to translocate the tRNAs correctly. Binds to ribosomes in a GTP-dependent manner. This Shewanella pealeana (strain ATCC 700345 / ANG-SQ1) protein is Elongation factor 4.